Consider the following 215-residue polypeptide: Chloramphenicol acetyltransferase (215 aa).

H189 functions as the Proton acceptor in the catalytic mechanism.

It belongs to the chloramphenicol acetyltransferase family. In terms of assembly, homotrimer.

The enzyme catalyses chloramphenicol + acetyl-CoA = chloramphenicol 3-acetate + CoA. In terms of biological role, this enzyme is an effector of chloramphenicol resistance in bacteria. This Staphylococcus intermedius protein is Chloramphenicol acetyltransferase (cat).